We begin with the raw amino-acid sequence, 215 residues long: Large ribosomal subunit protein uL3 (215 aa).

The interval Gly-136–Lys-155 is disordered. At Gln-151 the chain carries N5-methylglutamine.

The protein belongs to the universal ribosomal protein uL3 family. In terms of assembly, part of the 50S ribosomal subunit. Forms a cluster with proteins L14 and L19. Post-translationally, methylated by PrmB.

One of the primary rRNA binding proteins, it binds directly near the 3'-end of the 23S rRNA, where it nucleates assembly of the 50S subunit. This is Large ribosomal subunit protein uL3 from Rickettsia canadensis (strain McKiel).